A 465-amino-acid chain; its full sequence is Ribulose bisphosphate carboxylase large chain (465 aa).

Residue K4 is modified to N6,N6,N6-trimethyllysine. Residues N113 and T163 each coordinate substrate. The active-site Proton acceptor is K165. K167 contacts substrate. Mg(2+) contacts are provided by K191, D193, and E194. The residue at position 191 (K191) is an N6-carboxylysine. The Proton acceptor role is filled by H284. Positions 285, 317, and 369 each coordinate substrate.

Belongs to the RuBisCO large chain family. Type I subfamily. Heterohexadecamer of 8 large chains and 8 small chains; disulfide-linked. The disulfide link is formed within the large subunit homodimers. It depends on Mg(2+) as a cofactor. In terms of processing, the disulfide bond which can form in the large chain dimeric partners within the hexadecamer appears to be associated with oxidative stress and protein turnover.

Its subcellular location is the plastid. The protein resides in the chloroplast. It catalyses the reaction 2 (2R)-3-phosphoglycerate + 2 H(+) = D-ribulose 1,5-bisphosphate + CO2 + H2O. The catalysed reaction is D-ribulose 1,5-bisphosphate + O2 = 2-phosphoglycolate + (2R)-3-phosphoglycerate + 2 H(+). Functionally, ruBisCO catalyzes two reactions: the carboxylation of D-ribulose 1,5-bisphosphate, the primary event in carbon dioxide fixation, as well as the oxidative fragmentation of the pentose substrate in the photorespiration process. Both reactions occur simultaneously and in competition at the same active site. The protein is Ribulose bisphosphate carboxylase large chain of Dillenia indica (Elephant apple).